The primary structure comprises 533 residues: NAD(P)H-quinone oxidoreductase chain 4 1 (533 aa).

The next 14 helical transmembrane spans lie at 6–26, 37–57, 87–107, 113–133, 137–157, 169–189, 209–229, 243–263, 277–297, 311–331, 332–352, 376–396, 417–437, and 461–481; these read FPWL…IPLI, YSLF…WQHF, LSMP…LASW, PKLF…VFTA, MLFF…ISIW, FILY…ALAF, WLEL…LSIF, NAPG…YALI, FAPV…LNAF, ISHM…GLNG, ALLQ…LAGV, FALF…SGFV, VTIL…LSML, and LFVA…PKLT.

The protein belongs to the complex I subunit 4 family.

It localises to the cellular thylakoid membrane. It carries out the reaction a plastoquinone + NADH + (n+1) H(+)(in) = a plastoquinol + NAD(+) + n H(+)(out). The enzyme catalyses a plastoquinone + NADPH + (n+1) H(+)(in) = a plastoquinol + NADP(+) + n H(+)(out). Functionally, NDH-1 shuttles electrons from NAD(P)H, via FMN and iron-sulfur (Fe-S) centers, to quinones in the respiratory chain. The immediate electron acceptor for the enzyme in this species is believed to be plastoquinone. Couples the redox reaction to proton translocation (for every two electrons transferred, four hydrogen ions are translocated across the cytoplasmic membrane), and thus conserves the redox energy in a proton gradient. The chain is NAD(P)H-quinone oxidoreductase chain 4 1 from Synechococcus elongatus (strain ATCC 33912 / PCC 7942 / FACHB-805) (Anacystis nidulans R2).